We begin with the raw amino-acid sequence, 746 residues long: 4-hydroxy-3-methylbut-2-en-1-yl diphosphate synthase (flavodoxin) (746 aa).

Cys-653, Cys-656, Cys-687, and Glu-694 together coordinate [4Fe-4S] cluster.

It belongs to the IspG family. Requires [4Fe-4S] cluster as cofactor.

It carries out the reaction (2E)-4-hydroxy-3-methylbut-2-enyl diphosphate + oxidized [flavodoxin] + H2O + 2 H(+) = 2-C-methyl-D-erythritol 2,4-cyclic diphosphate + reduced [flavodoxin]. It functions in the pathway isoprenoid biosynthesis; isopentenyl diphosphate biosynthesis via DXP pathway; isopentenyl diphosphate from 1-deoxy-D-xylulose 5-phosphate: step 5/6. In terms of biological role, converts 2C-methyl-D-erythritol 2,4-cyclodiphosphate (ME-2,4cPP) into 1-hydroxy-2-methyl-2-(E)-butenyl 4-diphosphate. This Chlorobaculum tepidum (strain ATCC 49652 / DSM 12025 / NBRC 103806 / TLS) (Chlorobium tepidum) protein is 4-hydroxy-3-methylbut-2-en-1-yl diphosphate synthase (flavodoxin).